Here is a 329-residue protein sequence, read N- to C-terminus: NAD(+) hydrolase TcpA (329 aa).

One can recognise an MPN domain in the interval 5–134; sequence VSISYLALEQ…ADCVRFYTVR (130 aa). Positions 192-324 constitute a TIR domain; that stretch reads FEYDVFICHA…YVVNEILRVL (133 aa). NAD(+) contacts are provided by residues 201-202 and serine 231; that span reads AH. Glutamate 267 is an active-site residue.

It carries out the reaction NAD(+) + H2O = ADP-D-ribose + nicotinamide + H(+). Functionally, NAD(+) hydrolase (NADase) that catalyzes cleavage of NAD(+) into ADP-D-ribose (ADPR) and nicotinamide. The chain is NAD(+) hydrolase TcpA from Theionarchaea archaeon (strain DG-70-1).